A 239-amino-acid chain; its full sequence is Cell number regulator 6 (239 aa).

Polar residues predominate over residues 1–10; sequence MAEDATSSHP. Positions 1-33 are disordered; it reads MAEDATSSHPSRYVKLTKDQDAPAEDIRPGELN. Basic and acidic residues predominate over residues 16 to 29; the sequence is LTKDQDAPAEDIRP. 2 consecutive transmembrane segments (helical) span residues 107-127 and 136-156; these read CVCHAVFVEGGITLAILTAIF and FLIGEGLVFSWWLCATYTGIF.

Belongs to the cornifelin family. In terms of tissue distribution, expressed in roots, leaves, stalks, apical meristems, immature ears, endosperm, pericarp and tassel spikelets.

It localises to the membrane. The protein is Cell number regulator 6 (CNR6) of Zea mays (Maize).